A 152-amino-acid chain; its full sequence is MGLSTLEQKLTEIISAPVEALGYELVGIEFIRGRQSTLRIYIDSDDGITVDACADVSHQVSAVLDVEDPITVAYNLEVSSPGLDRPMFTAEHYTRYLGEEVTLVLRMAMQNRRKWQGIIKAVDGEMITVTVDGKDEVFALSNIQKANLVPHF.

This sequence belongs to the RimP family.

Its subcellular location is the cytoplasm. Functionally, required for maturation of 30S ribosomal subunits. The protein is Ribosome maturation factor RimP of Yersinia pestis.